Consider the following 105-residue polypeptide: Large ribosomal subunit protein uL24 (105 aa).

Belongs to the universal ribosomal protein uL24 family. In terms of assembly, part of the 50S ribosomal subunit.

Functionally, one of two assembly initiator proteins, it binds directly to the 5'-end of the 23S rRNA, where it nucleates assembly of the 50S subunit. Its function is as follows. One of the proteins that surrounds the polypeptide exit tunnel on the outside of the subunit. This Nitrosomonas europaea (strain ATCC 19718 / CIP 103999 / KCTC 2705 / NBRC 14298) protein is Large ribosomal subunit protein uL24.